The following is a 245-amino-acid chain: Intron-associated endonuclease 1 (245 aa).

A GIY-YIG domain is found at 1–88; that stretch reads MKSGIYQIKN…IKELNSKING (88 aa).

This sequence to endonucleases of group I introns of fungi and phage. It depends on Mg(2+) as a cofactor.

Functionally, this endonuclease is specific to the thymidylate synthase (td) gene splice junction and is involved in intron homing. This is Intron-associated endonuclease 1 (ITEVIR) from Enterobacteria phage T4 (Bacteriophage T4).